We begin with the raw amino-acid sequence, 185 residues long: ATP-dependent protease subunit HslV (185 aa).

Thr2 is an active-site residue. Gly157, Cys160, and Thr163 together coordinate Na(+).

It belongs to the peptidase T1B family. HslV subfamily. In terms of assembly, a double ring-shaped homohexamer of HslV is capped on each side by a ring-shaped HslU homohexamer. The assembly of the HslU/HslV complex is dependent on binding of ATP.

The protein resides in the cytoplasm. The enzyme catalyses ATP-dependent cleavage of peptide bonds with broad specificity.. Its activity is regulated as follows. Allosterically activated by HslU binding. Protease subunit of a proteasome-like degradation complex believed to be a general protein degrading machinery. The chain is ATP-dependent protease subunit HslV from Idiomarina loihiensis (strain ATCC BAA-735 / DSM 15497 / L2-TR).